The chain runs to 395 residues: MWLLLVTSVLSAFGGAHGLFGKLGPKNPEANMNVSQMITYWGYPSEEYEVVTEDGYILGVYRIPYGKKNSENIGKRPVAYLQHGLIASATNWITNLPNNSLAFILADAGYDVWLGNSRGNTWSRKNVYYSPDSVEFWAFSFDEMAKYDLPATIDFIVQKTGQEKIHYVGHSQGTTIGFIAFSTNPALAKKIKRFYALAPVATVKYTESPFKKISLIPKFLLKVIFGNKMFMPHNYLDQFLGTEVCSRELLDLLCSNALFIFCGFDKKNLNVSRFDVYLGHNPAGTSTQDLFHWAQLAKSGKLQAYNWGSPLQNMLHYNQKTPPYYDVSAMTVPIAVWNGGHDILADPQDVAMLLPKLPNLLYHKEILPYNHLDFIWAMDAPQEVYNEIVTMMAED.

The N-terminal stretch at 1–18 (MWLLLVTSVLSAFGGAHG) is a signal peptide. A glycan (N-linked (GlcNAc...) asparagine) is linked at Asn33. The AB hydrolase-1 domain maps to 81 to 376 (LQHGLIASAT…LPYNHLDFIW (296 aa)). The active-site Nucleophile is Ser171. Cysteines 245 and 254 form a disulfide. The N-linked (GlcNAc...) asparagine glycan is linked to Asn270. Residues Asp342 and His371 each act as charge relay system in the active site.

The protein belongs to the AB hydrolase superfamily. Lipase family.

It localises to the secreted. The enzyme catalyses a triacylglycerol + H2O = a diacylglycerol + a fatty acid + H(+). It carries out the reaction 1,2,3-tri-(9Z-octadecenoyl)-glycerol + H2O = 1,2-di-(9Z-octadecenoyl)-sn-glycerol + (9Z)-octadecenoate + H(+). The catalysed reaction is 1,2,3-trioctanoylglycerol + H2O = 1,2-dioctanoyl-sn-glycerol + octanoate + H(+). In terms of biological role, catalyzes the hydrolysis of triacylglycerols to yield free fatty acids, diacylglycerol, monoacylglycerol, and glycerol. Shows a preferential hydrolysis at the sn-3 position of triacylglycerol. The polypeptide is Gastric triacylglycerol lipase (Lipf) (Mus musculus (Mouse)).